Here is a 309-residue protein sequence, read N- to C-terminus: Homoserine kinase (309 aa).

ATP is bound at residue 91-101; that stretch reads PIGSGLGSSAC.

This sequence belongs to the GHMP kinase family. Homoserine kinase subfamily.

The protein localises to the cytoplasm. The catalysed reaction is L-homoserine + ATP = O-phospho-L-homoserine + ADP + H(+). Its pathway is amino-acid biosynthesis; L-threonine biosynthesis; L-threonine from L-aspartate: step 4/5. Catalyzes the ATP-dependent phosphorylation of L-homoserine to L-homoserine phosphate. This chain is Homoserine kinase, found in Pectobacterium atrosepticum (strain SCRI 1043 / ATCC BAA-672) (Erwinia carotovora subsp. atroseptica).